The sequence spans 379 residues: Cytochrome b (379 aa).

The next 4 helical transmembrane spans lie at 33 to 53 (FGSL…FLAM), 77 to 98 (WLIR…FIHV), 113 to 133 (WNIG…GYVL), and 178 to 198 (FFAF…VHLL). Positions 83 and 97 each coordinate heme b. The heme b site is built by H182 and H196. H201 contacts a ubiquinone. 4 consecutive transmembrane segments (helical) span residues 226-246 (TKDL…ALFF), 288-308 (LGGV…PLLN), 320-340 (VTQV…WIGG), and 347-367 (FTMI…ILMP).

It belongs to the cytochrome b family. In terms of assembly, the cytochrome bc1 complex contains 11 subunits: 3 respiratory subunits (MT-CYB, CYC1 and UQCRFS1), 2 core proteins (UQCRC1 and UQCRC2) and 6 low-molecular weight proteins (UQCRH/QCR6, UQCRB/QCR7, UQCRQ/QCR8, UQCR10/QCR9, UQCR11/QCR10 and a cleavage product of UQCRFS1). This cytochrome bc1 complex then forms a dimer. It depends on heme b as a cofactor.

It is found in the mitochondrion inner membrane. Component of the ubiquinol-cytochrome c reductase complex (complex III or cytochrome b-c1 complex) that is part of the mitochondrial respiratory chain. The b-c1 complex mediates electron transfer from ubiquinol to cytochrome c. Contributes to the generation of a proton gradient across the mitochondrial membrane that is then used for ATP synthesis. This is Cytochrome b (MT-CYB) from Akodon kofordi (Koford's grass mouse).